Consider the following 281-residue polypeptide: Pantothenate synthetase (281 aa).

30–37 (MGNLHQGH) contributes to the ATP binding site. His37 functions as the Proton donor in the catalytic mechanism. (R)-pantoate is bound at residue Gln61. Residue Gln61 participates in beta-alanine binding. 149 to 152 (GRKD) lines the ATP pocket. Gln155 provides a ligand contact to (R)-pantoate. ATP contacts are provided by residues Ile178 and 186 to 189 (MSSR).

It belongs to the pantothenate synthetase family. Homodimer.

The protein resides in the cytoplasm. The enzyme catalyses (R)-pantoate + beta-alanine + ATP = (R)-pantothenate + AMP + diphosphate + H(+). It participates in cofactor biosynthesis; (R)-pantothenate biosynthesis; (R)-pantothenate from (R)-pantoate and beta-alanine: step 1/1. In terms of biological role, catalyzes the condensation of pantoate with beta-alanine in an ATP-dependent reaction via a pantoyl-adenylate intermediate. The chain is Pantothenate synthetase from Shewanella denitrificans (strain OS217 / ATCC BAA-1090 / DSM 15013).